We begin with the raw amino-acid sequence, 382 residues long: Neuropeptide Y receptor type 1 (382 aa).

At Met1 to His33 the chain is on the extracellular side. 3 N-linked (GlcNAc...) asparagine glycosylation sites follow: Asn2, Asn11, and Asn17. A helical transmembrane segment spans residues Leu34–Val54. The Cytoplasmic segment spans residues Ser55–Asn75. The helical transmembrane segment at Ile76–Thr96 threads the bilayer. Topologically, residues Phe97 to Asn115 are extracellular. Cys112 and Cys197 are oxidised to a cystine. Residues Pro116–Glu136 form a helical membrane-spanning segment. Residues Arg137–His153 are Cytoplasmic-facing. The helical transmembrane segment at Ala154 to Ile174 threads the bilayer. At Tyr175–Tyr210 the chain is on the extracellular side. The helical transmembrane segment at Thr211–Phe231 threads the bilayer. The Cytoplasmic segment spans residues Lys232–Arg259. The chain crosses the membrane as a helical span at residues Ile260–Ile280. Residues Phe281–Asn298 are Extracellular-facing. A helical membrane pass occupies residues Leu299–Tyr319. At Gly320–Val382 the chain is on the cytoplasmic side. Cys337 is lipidated: S-palmitoyl cysteine. 2 positions are modified to phosphoserine: Ser367 and Ser375.

It belongs to the G-protein coupled receptor 1 family. The alpha form is highly expressed in the brain, heart, kidney, spleen, skeletal muscle, and lung, whereas the beta receptor mRNA was not detected in these tissues. However, the beta form is expressed in mouse embryonic developmental stage (7 and 11 days), bone marrow cells and several hematopoietic cell lines.

Its subcellular location is the cell membrane. Functionally, receptor for neuropeptide Y and peptide YY. This Mus musculus (Mouse) protein is Neuropeptide Y receptor type 1 (Npy1r).